We begin with the raw amino-acid sequence, 716 residues long: Fatty acid oxidation complex subunit alpha (716 aa).

The enoyl-CoA hydratase/isomerase stretch occupies residues 1-189 (MIYQSPTIQV…KVGAVDAVVA (189 aa)). Substrate is bound at residue aspartate 296. The interval 311-716 (KAVNSAAVLG…AANNGSYYQA (406 aa)) is 3-hydroxyacyl-CoA dehydrogenase. Residues methionine 324, aspartate 343, 400 to 402 (VVE), lysine 407, and serine 429 contribute to the NAD(+) site. Histidine 450 functions as the For 3-hydroxyacyl-CoA dehydrogenase activity in the catalytic mechanism. Asparagine 453 lines the NAD(+) pocket. Substrate is bound by residues asparagine 500 and tyrosine 660.

It in the N-terminal section; belongs to the enoyl-CoA hydratase/isomerase family. This sequence in the C-terminal section; belongs to the 3-hydroxyacyl-CoA dehydrogenase family. Heterotetramer of two alpha chains (FadB) and two beta chains (FadA).

The catalysed reaction is a (3S)-3-hydroxyacyl-CoA + NAD(+) = a 3-oxoacyl-CoA + NADH + H(+). It catalyses the reaction a (3S)-3-hydroxyacyl-CoA = a (2E)-enoyl-CoA + H2O. It carries out the reaction a 4-saturated-(3S)-3-hydroxyacyl-CoA = a (3E)-enoyl-CoA + H2O. The enzyme catalyses (3S)-3-hydroxybutanoyl-CoA = (3R)-3-hydroxybutanoyl-CoA. The catalysed reaction is a (3Z)-enoyl-CoA = a 4-saturated (2E)-enoyl-CoA. It catalyses the reaction a (3E)-enoyl-CoA = a 4-saturated (2E)-enoyl-CoA. It functions in the pathway lipid metabolism; fatty acid beta-oxidation. Its function is as follows. Involved in the aerobic and anaerobic degradation of long-chain fatty acids via beta-oxidation cycle. Catalyzes the formation of 3-oxoacyl-CoA from enoyl-CoA via L-3-hydroxyacyl-CoA. It can also use D-3-hydroxyacyl-CoA and cis-3-enoyl-CoA as substrate. The polypeptide is Fatty acid oxidation complex subunit alpha (Shewanella oneidensis (strain ATCC 700550 / JCM 31522 / CIP 106686 / LMG 19005 / NCIMB 14063 / MR-1)).